A 261-amino-acid chain; its full sequence is Spermatogenesis-associated protein 46 (261 aa).

Positions 140 to 159 are disordered; sequence SSSSSPENTCPREATKKSRH.

As to expression, testis-specific.

The protein resides in the nucleus membrane. In terms of biological role, plays a role in spermiogenesis and fertilization. In Homo sapiens (Human), this protein is Spermatogenesis-associated protein 46.